A 409-amino-acid chain; its full sequence is Adenosine receptor A2a (409 aa).

The Extracellular portion of the chain corresponds to 1–4 (MSSS). Residues 5–29 (VYITVELVIAVLAILGNVLVCWAVW) form a helical membrane-spanning segment. The Cytoplasmic segment spans residues 30-39 (INSNLQNVTN). A helical membrane pass occupies residues 40–63 (YFVVSLAAADIAVGVLAIPFAITI). At 64–74 (STGFCAACHGC) the chain is on the extracellular side. Disulfide bonds link C68–C156, C71–C143, and C74–C163. The helical transmembrane segment at 75–97 (LFFACFVLVLTQSSIFSLLTITI) threads the bilayer. Topologically, residues 98-117 (DRYIAIRIPLRYNGLVTCTR) are cytoplasmic. The helical transmembrane segment at 118–140 (AKGIIAICWVLSFAIGLTPMLGW) threads the bilayer. The Extracellular segment spans residues 141-170 (NNCSQPKGDKNHSESCDEGQVTCLFEDVVP). N-linked (GlcNAc...) asparagine glycosylation is found at N142 and N151. Residue E166 participates in adenosine binding. Residues 171–195 (MNYMVYYNFFAFVLVPLLLMLGIYL) traverse the membrane as a helical segment. The Cytoplasmic segment spans residues 196 to 231 (RIFLAARRQLKQMESQPLPGERTRSTLQKEVHPAKS). The helical transmembrane segment at 232 to 255 (LAIIVGLFALCCLPLNIINCFTFF) threads the bilayer. N250 contributes to the adenosine binding site. C256 and C259 are joined by a disulfide. The Extracellular segment spans residues 256–263 (CPECDHAP). Residues 264 to 287 (PWLMYLTIILSHGNSVVNPLIYAY) traverse the membrane as a helical segment. Residues S274 and H275 each coordinate adenosine. Over 288 to 409 (RIREFRQTFR…PPAHGGAGVS (122 aa)) the chain is Cytoplasmic. Disordered regions lie at residues 316-336 (TSARASAAHSPEGEQVSLRLN) and 369-409 (QRSH…AGVS).

This sequence belongs to the G-protein coupled receptor 1 family. In terms of assembly, interacts (via cytoplasmic C-terminal domain) with USP4; the interaction is direct. May interact with DRD4. Interacts with NECAB2. Interacts (via cytoplasmic C-terminal domain) with GAS2L2; interaction enhances receptor-mediated adenylyl cyclase activity. In terms of processing, ubiquitinated. Deubiquitinated by USP4; leading to stabilization and expression at the cell surface.

The protein localises to the cell membrane. Functionally, receptor for adenosine. The activity of this receptor is mediated by G proteins which activate adenylyl cyclase. The protein is Adenosine receptor A2a (ADORA2A) of Cavia porcellus (Guinea pig).